A 1110-amino-acid polypeptide reads, in one-letter code: MGKFYYSNRRLACWAAGKNPHLGGSVEQWLAAINTDSSFRQTVKEDVQDNREQPTAIRMFSWKVGFGPIDNPEKCDWHFVLTGERPAQPTRPVKADEVVVVPQLKKVVIPSPPPPPAVYFRAVGAFAPTRSGFIRATVERLSREREESRAAALFAELPLEYPQGAPLKLSLAMKFAMLKHTTWRKWYDTSDERLSEAHPGGPCLPPPPPIQNPPFFQERVREFCRMKSCARAFALETSLGLNRAWVGLVDIPSTSVCCADGRTTGGQTIAQEADPLQHRVSTSVAPGRAQWISERRQALRRREQANSLQGLAAQTDMTFEQARNAYLGAADMIEQGLPLLPPLRSAYAPRGLWRGPSTRANYTLDFRLNGIPTGTNTLEILYNPVSEEEMEEYRDRGMSAVVIDALEIAINPFGMPGNPTDLTVVATYGHERDMTRAFIGSASTFLGNGLARAIFFPGLQYSQEEPRRESIIRLYVASTNATVDTDSVLAAISVGTLRQHVGSMHYRTVASTVHQAQVQGTTLRATMMGNTVVVSPEGSLVTGTPEARVEIGGGSSIRMVGPLQWESVEEPGQTFSIRSRSRSVRIDRNVDLPQLEAEPRLSSTVRGLAGRGVVYIPKDCQANRYLGTLNIRDMISDFKGVQYEKWITAGLVMPTFKIVIRLPANAFTGLTWVMSFDAYNRITSRITTSADPVYTLSVPHWLIHHKLGTFSCEIDYGELCGHAMWFKSTTFESPKLHFTCLTGNNKELAADWQAVVELYAELEEASSFLGKPTLVFDPGVFNGKFQFLTCPPIFFDLTAVTALKSAGLTLGQVPMVGTTKVYNLNSALVSCVLGMGGTIRGRVHICAPIFYSIVLWVVSEWNGTTMDWNELFKYPGVYVEEDGSFEVKIRSPYHRTPARLLAGQSQRDMSSLNFYAIAGPIAPSGETARLPIVVQIDEIVRPDLALPSFEDDYFVWVDFSEFTLDKEELEIGSRFFDFTSSTCRVIMGENPFAAMIACHGLHSGVLDLKLQWSLNTDFGKSSGSVTVTKLVGDKATGLDGPSQVFAIQKLEGVTDLLIGNFAGANPNTHFSLYSRWMAIKLDQAKSIKVLRVLCKPRPGFSFYGRTSFPV.

The protein belongs to the nepoviruses RNA2 polyprotein family. Specific enzymatic cleavages in vivo by the P1 encoded 3C-like protease yield mature proteins.

It is found in the host cell junction. Its subcellular location is the host plasmodesma. The protein localises to the host cytoplasm. It localises to the host nucleus. The protein resides in the virion. Implicated in RNA2 replication. Could also be required for nematode transmission of the virus. In terms of biological role, transports viral genome to neighboring plant cells directly through plasmosdesmata, without any budding. The movement protein allows efficient cell to cell propagation, by bypassing the host cell wall barrier. Acts by forming a tubular structure at the host plasmodesmata, enlarging it enough to allow free passage of virion capsids. The chain is RNA2 polyprotein from Vitis vinifera (Grape).